The chain runs to 1231 residues: uncharacterized protein (1231 aa).

Disordered regions lie at residues Leu-171–Asp-197, Asp-210–Thr-259, and Ala-389–Arg-547. Residues Arg-440–Ile-450 show a composition bias toward basic residues. Phosphoserine is present on residues Ser-449, Ser-451, Ser-453, and Ser-455. The span at Arg-458–Gly-502 shows a compositional bias: basic residues. Basic and acidic residues predominate over residues Arg-503–Gly-541. Tyr-549 carries the phosphotyrosine modification. Disordered regions lie at residues Lys-570 to Pro-591, Pro-950 to Glu-981, and Thr-1058 to Asn-1203. A phosphoserine mark is found at Ser-573 and Ser-589. Thr-970 carries the phosphothreonine modification. Ser-972 carries the post-translational modification Phosphoserine. Residues Tyr-1076–Gln-1103 are compositionally biased toward polar residues. Over residues Gln-1118–Gln-1127 the composition is skewed to low complexity. Residues Pro-1178–Asn-1203 are compositionally biased toward pro residues.

This is an uncharacterized protein from Drosophila melanogaster (Fruit fly).